The following is a 323-amino-acid chain: tRNA dimethylallyltransferase (323 aa).

21–28 provides a ligand contact to ATP; the sequence is GPTACNKS. 23–28 provides a ligand contact to substrate; the sequence is TACNKS. 3 interaction with substrate tRNA regions span residues 46–49, 171–175, and 252–257; these read DSAL, QRVLR, and RCVGYR.

It belongs to the IPP transferase family. In terms of assembly, monomer. The cofactor is Mg(2+).

It carries out the reaction adenosine(37) in tRNA + dimethylallyl diphosphate = N(6)-dimethylallyladenosine(37) in tRNA + diphosphate. In terms of biological role, catalyzes the transfer of a dimethylallyl group onto the adenine at position 37 in tRNAs that read codons beginning with uridine, leading to the formation of N6-(dimethylallyl)adenosine (i(6)A). The chain is tRNA dimethylallyltransferase from Buchnera aphidicola subsp. Baizongia pistaciae (strain Bp).